The primary structure comprises 315 residues: Methionyl-tRNA formyltransferase (315 aa).

(6S)-5,6,7,8-tetrahydrofolate is bound at residue 113-116 (SLLP).

This sequence belongs to the Fmt family.

It carries out the reaction L-methionyl-tRNA(fMet) + (6R)-10-formyltetrahydrofolate = N-formyl-L-methionyl-tRNA(fMet) + (6S)-5,6,7,8-tetrahydrofolate + H(+). Functionally, attaches a formyl group to the free amino group of methionyl-tRNA(fMet). The formyl group appears to play a dual role in the initiator identity of N-formylmethionyl-tRNA by promoting its recognition by IF2 and preventing the misappropriation of this tRNA by the elongation apparatus. This is Methionyl-tRNA formyltransferase from Pectobacterium atrosepticum (strain SCRI 1043 / ATCC BAA-672) (Erwinia carotovora subsp. atroseptica).